The chain runs to 56 residues: Bacteriocin sublancin-168 (56 aa).

Positions 1 to 19 (MEKLFKEVKLEELENQKGS) are excised as a propeptide. Intrachain disulfides connect C26/C55 and C33/C48. C41 is a glycosylation site (S-linked (Glc) cysteine; by host).

In terms of assembly, monomer. Production of active sublancin-168 requires at least one thiol-disulfide oxidoreductase (BdbB or, in its absence, BdbC). Membrane translocation and cleavage of the precursor are probably performed by SunT.

It localises to the secreted. Functionally, bacteriocin active against Gram-positive bacteria. Inhibits B.cereus spore outgrowth, after the germination stage, approximately 1000-fold better than it inhibits exponential growth of the same cells. Inhibits B.subtilis strain ATCC 6633. This chain is Bacteriocin sublancin-168 (sunA), found in Bacillus pumilus (Bacillus mesentericus).